Reading from the N-terminus, the 124-residue chain is Small ribosomal subunit protein uS12 (124 aa).

D89 carries the 3-methylthioaspartic acid modification.

The protein belongs to the universal ribosomal protein uS12 family. Part of the 30S ribosomal subunit. Contacts proteins S8 and S17. May interact with IF1 in the 30S initiation complex.

In terms of biological role, with S4 and S5 plays an important role in translational accuracy. Interacts with and stabilizes bases of the 16S rRNA that are involved in tRNA selection in the A site and with the mRNA backbone. Located at the interface of the 30S and 50S subunits, it traverses the body of the 30S subunit contacting proteins on the other side and probably holding the rRNA structure together. The combined cluster of proteins S8, S12 and S17 appears to hold together the shoulder and platform of the 30S subunit. This is Small ribosomal subunit protein uS12 from Erwinia amylovora (Fire blight bacteria).